The chain runs to 179 residues: ATP synthase subunit delta (179 aa).

This sequence belongs to the ATPase delta chain family. In terms of assembly, F-type ATPases have 2 components, F(1) - the catalytic core - and F(0) - the membrane proton channel. F(1) has five subunits: alpha(3), beta(3), gamma(1), delta(1), epsilon(1). F(0) has three main subunits: a(1), b(2) and c(10-14). The alpha and beta chains form an alternating ring which encloses part of the gamma chain. F(1) is attached to F(0) by a central stalk formed by the gamma and epsilon chains, while a peripheral stalk is formed by the delta and b chains.

It is found in the cell membrane. Its function is as follows. F(1)F(0) ATP synthase produces ATP from ADP in the presence of a proton or sodium gradient. F-type ATPases consist of two structural domains, F(1) containing the extramembraneous catalytic core and F(0) containing the membrane proton channel, linked together by a central stalk and a peripheral stalk. During catalysis, ATP synthesis in the catalytic domain of F(1) is coupled via a rotary mechanism of the central stalk subunits to proton translocation. In terms of biological role, this protein is part of the stalk that links CF(0) to CF(1). It either transmits conformational changes from CF(0) to CF(1) or is implicated in proton conduction. The chain is ATP synthase subunit delta from Staphylococcus saprophyticus subsp. saprophyticus (strain ATCC 15305 / DSM 20229 / NCIMB 8711 / NCTC 7292 / S-41).